The following is a 453-amino-acid chain: Serine protease HTRA3 (453 aa).

Residues 1-17 form the signal peptide; that stretch reads MQARALLLAALAALALA. The region spanning 21–84 is the IGFBP N-terminal domain; sequence PAAPCPARCD…ECVRGLCRCR (64 aa). 8 cysteine pairs are disulfide-bonded: Cys25–Cys48, Cys29–Cys50, Cys34–Cys51, Cys39–Cys54, Cys62–Cys76, Cys70–Cys81, Cys83–Cys101, and Cys90–Cys126. The Kazal-like domain maps to 64–128; it reads GPLDSPCGES…RQLQKGACPL (65 aa). A serine protease region spans residues 175-340; the sequence is GSGFIMSEAG…AIPSDRITRF (166 aa). Catalysis depends on charge relay system residues His191, Asp227, and Ser305. Positions 359-444 constitute a PDZ domain; the sequence is IRMRTITPSL…EVRRGNDDLL (86 aa).

Belongs to the peptidase S1C family. As to quaternary structure, homotrimer. Interacts with TGFB1; the interaction inhibits TGFB-mediated signaling. Interacts with BMP4; the interaction inhibits BMP4-mediated signaling. Interacts with TGFB2 and GDF5. Interacts with MYH9. In terms of tissue distribution, widely expressed, with highest levels in both adult and fetal heart, ovary, uterus placenta, and bladder. In the endometrium, expressed in epithelial glands and the stroma. Also present in leukocytes. Isoform 1 is predominant in heart and skeletal muscle, whereas isoform 2 is predominant in placenta and kidney.

It is found in the secreted. Serine protease that cleaves beta-casein/CSN2 as well as several extracellular matrix (ECM) proteoglycans such as decorin/DCN, biglycan/BGN and fibronectin/FN1. Inhibits signaling mediated by TGF-beta family proteins possibly indirectly by degradation of these ECM proteoglycans. May act as a tumor suppressor. Negatively regulates, in vitro, trophoblast invasion during placental development and may be involved in the development of the placenta in vivo. May also have a role in ovarian development, granulosa cell differentiation and luteinization. The sequence is that of Serine protease HTRA3 (HTRA3) from Homo sapiens (Human).